Reading from the N-terminus, the 508-residue chain is uncharacterized protein (508 aa).

A helical transmembrane segment spans residues A7–P29.

It localises to the membrane. This is an uncharacterized protein from Archaeoglobus fulgidus (strain ATCC 49558 / DSM 4304 / JCM 9628 / NBRC 100126 / VC-16).